The chain runs to 216 residues: Maleylacetoacetate isomerase (216 aa).

An N-acetylmethionine modification is found at Met-1. Positions 4–87 constitute a GST N-terminal domain; it reads GKPILYSYFR…YLEETRPIPR (84 aa). Residues 14 to 19 and Gln-45 contribute to the glutathione site; that span reads SSCSWR. Lys-57 is subject to N6-succinyllysine. Glutathione contacts are provided by residues Val-59, 71–72, Gln-111, and 115–117; these read QS and NLS. Residues 92-212 enclose the GST C-terminal domain; the sequence is DPQKRAIVRM…HPRRQPDTPA (121 aa). Thr-136 carries the phosphothreonine modification. A Phosphoserine modification is found at Ser-137. Position 177 is an N6-succinyllysine (Lys-177). Residue Ser-181 is modified to Phosphoserine.

This sequence belongs to the GST superfamily. Zeta family. Homodimer. Glutathione is required as a cofactor. Expressed in liver, kidney, seminal glands and breast.

The protein resides in the cytoplasm. It catalyses the reaction 4-maleylacetoacetate = 4-fumarylacetoacetate. The enzyme catalyses RX + glutathione = an S-substituted glutathione + a halide anion + H(+). Its pathway is amino-acid degradation; L-phenylalanine degradation; acetoacetate and fumarate from L-phenylalanine: step 5/6. In terms of biological role, probable bifunctional enzyme showing minimal glutathione-conjugating activity with ethacrynic acid and 7-chloro-4-nitrobenz-2-oxa-1, 3-diazole and maleylacetoacetate isomerase activity. Also has low glutathione peroxidase activity with t-butyl and cumene hydroperoxides. Is able to catalyze the glutathione dependent oxygenation of dichloroacetic acid to glyoxylic acid. The protein is Maleylacetoacetate isomerase (Gstz1) of Mus musculus (Mouse).